A 239-amino-acid chain; its full sequence is Large ribosomal subunit protein uL3 (239 aa).

Disordered stretches follow at residues 140–166 (SHRS…PGHM) and 211–239 (PLPK…QEGA). Residue Gln151 is modified to N5-methylglutamine.

It belongs to the universal ribosomal protein uL3 family. As to quaternary structure, part of the 50S ribosomal subunit. Forms a cluster with proteins L14 and L19. In terms of processing, methylated by PrmB.

Its function is as follows. One of the primary rRNA binding proteins, it binds directly near the 3'-end of the 23S rRNA, where it nucleates assembly of the 50S subunit. The polypeptide is Large ribosomal subunit protein uL3 (Bradyrhizobium sp. (strain BTAi1 / ATCC BAA-1182)).